Consider the following 537-residue polypeptide: Asparagine-rich protein (537 aa).

5 disordered regions span residues 1 to 22, 187 to 254, 336 to 372, 399 to 479, and 509 to 528; these read YNNN…QNTN, NMNI…NNNF, YNNN…YGYD, LNNN…DDWG, and DLSK…MKKD. 2 stretches are compositionally biased toward low complexity: residues 336-347 and 399-469; these read YNNNESNTANPN and LNNN…NQNN. A compositionally biased stretch (acidic residues) spans 470-479; that stretch reads NEDEDDDDWG. Basic and acidic residues predominate over residues 509-518; that stretch reads DLSKKGNDGK.

The chain is Asparagine-rich protein from Plasmodium falciparum.